Reading from the N-terminus, the 449-residue chain is Chitobiosyldiphosphodolichol beta-mannosyltransferase (449 aa).

Topologically, residues Met-1–Arg-7 are lumenal. A helical transmembrane segment spans residues Trp-8–Pro-28. The short motif at Leu-21–Tyr-32 is the Dolichol recognition element. Over Tyr-29–Thr-104 the chain is Cytoplasmic. An intramembrane region (helical) is located at residues Ser-105–Trp-125. The Cytoplasmic portion of the chain corresponds to Glu-126–His-449. A required for oligomerization region spans residues Gln-435–His-449.

This sequence belongs to the glycosyltransferase group 1 family. Glycosyltransferase 33 subfamily. As to quaternary structure, homodimer. ALG1 forms mannosyltransferases (MT) heteromeric complexes with either ALG2 or ALG11.

It is found in the endoplasmic reticulum membrane. The catalysed reaction is an N,N'-diacetylchitobiosyl-diphospho-di-trans,poly-cis-dolichol + GDP-alpha-D-mannose = a beta-D-Man-(1-&gt;4)-beta-D-GlcNAc-(1-&gt;4)-alpha-D-GlcNAc-diphospho-di-trans,poly-cis-dolichol + GDP + H(+). Its pathway is protein modification; protein glycosylation. Its function is as follows. Participates in the formation of the lipid-linked precursor oligosaccharide for N-glycosylation. Involved in assembling the dolichol-pyrophosphate-GlcNAc(2)-Man(5) intermediate on the cytoplasmic surface of the ER. This Saccharomyces cerevisiae (strain ATCC 204508 / S288c) (Baker's yeast) protein is Chitobiosyldiphosphodolichol beta-mannosyltransferase (ALG1).